The following is a 225-amino-acid chain: Reticulon-like protein B9 (225 aa).

The 186-residue stretch at 39–224 folds into the Reticulon domain; sequence VADILLWREP…PRGTVKNKKF (186 aa). 3 consecutive transmembrane segments (helical) span residues 50-70, 72-92, and 152-172; these read IAAT…VVEY, FITL…IWST, and YIVS…IGFV.

It is found in the endoplasmic reticulum membrane. This is Reticulon-like protein B9 (RTNLB9) from Arabidopsis thaliana (Mouse-ear cress).